The primary structure comprises 478 residues: MTNIVTRFAPSPTGFLHIGGARTALFNYLFARHHKGKFLLRIEDTDAARSTEEYKISIIDSLKWLKINWDNDIFYQSANLQRHVNIALELVKSGKAYYCFTSPEEIDLQRQLAITQKQSFIFRSPWRNNIPSSLSLKNNNKAYVIRFKAPDYGTTIINDHVQGEVVFQNQQIDDMILVRSDGTPTYMLAVVVDDHDMGITHIIRGDDHLTNAAKQIALYDALGWAAPAMVHIPLIYGPDGTKLSKRHGAIGVDAYQKMGYLPEALCNYLLRLGWSYQDEEIISHERAIKLFDIDGLGGKSAARLDFDKMLYLNGYYIRSTDNSILAKLVIEILSKQYILSNESCNLIQKGMSGLKSRANLLTDLAENAKIYVLESQLTFINEALNIIQKTPSMLITEVIDIINNLQELNCESVKQALTEFAKTKKMKLGQLMDPIRALLTGNTKSPSIFEVIPILGKIHTIKRLAGIKAIKSNNQTLV.

Residues 10 to 20 (PSPTGFLHIGG) carry the 'HIGH' region motif. The 'KMSKS' region motif lies at 242–246 (KLSKR). Lys-245 is a binding site for ATP.

It belongs to the class-I aminoacyl-tRNA synthetase family. Glutamate--tRNA ligase type 1 subfamily. Monomer.

Its subcellular location is the cytoplasm. The catalysed reaction is tRNA(Glu) + L-glutamate + ATP = L-glutamyl-tRNA(Glu) + AMP + diphosphate. Catalyzes the attachment of glutamate to tRNA(Glu) in a two-step reaction: glutamate is first activated by ATP to form Glu-AMP and then transferred to the acceptor end of tRNA(Glu). This is Glutamate--tRNA ligase 1 from Orientia tsutsugamushi (strain Boryong) (Rickettsia tsutsugamushi).